We begin with the raw amino-acid sequence, 96 residues long: Small ribosomal subunit protein bS6 (96 aa).

Belongs to the bacterial ribosomal protein bS6 family.

Binds together with bS18 to 16S ribosomal RNA. The polypeptide is Small ribosomal subunit protein bS6 (Streptococcus thermophilus (strain ATCC BAA-491 / LMD-9)).